A 352-amino-acid chain; its full sequence is Small ribosomal subunit biogenesis GTPase RsgA 1 (352 aa).

The tract at residues 1 to 24 (MAKKKKLTQGQVRRVRDNQQKRLK) is disordered. The region spanning 104-272 (TSVLTRPDYY…LIDSPGVREF (169 aa)) is the CP-type G domain. GTP contacts are provided by residues 160–163 (NKID) and 214–222 (GQSGVGKSS). C296, C301, H303, and C309 together coordinate Zn(2+).

This sequence belongs to the TRAFAC class YlqF/YawG GTPase family. RsgA subfamily. Monomer. Associates with 30S ribosomal subunit, binds 16S rRNA. It depends on Zn(2+) as a cofactor.

It localises to the cytoplasm. In terms of biological role, one of several proteins that assist in the late maturation steps of the functional core of the 30S ribosomal subunit. Helps release RbfA from mature subunits. May play a role in the assembly of ribosomal proteins into the subunit. Circularly permuted GTPase that catalyzes slow GTP hydrolysis, GTPase activity is stimulated by the 30S ribosomal subunit. The polypeptide is Small ribosomal subunit biogenesis GTPase RsgA 1 (Vibrio vulnificus (strain CMCP6)).